The chain runs to 351 residues: Glycerol-3-phosphate dehydrogenase [NAD(P)+] (351 aa).

NADPH-binding residues include Ser-18, Trp-19, Arg-38, and Lys-122. Residues Lys-122, Gly-153, and Ser-155 each contribute to the sn-glycerol 3-phosphate site. NADPH is bound at residue Ala-157. Residues Lys-208, Asp-261, Ser-271, Arg-272, and Asn-273 each coordinate sn-glycerol 3-phosphate. The Proton acceptor role is filled by Lys-208. An NADPH-binding site is contributed by Arg-272. Position 297 (Glu-297) interacts with NADPH.

It belongs to the NAD-dependent glycerol-3-phosphate dehydrogenase family.

It is found in the cytoplasm. It catalyses the reaction sn-glycerol 3-phosphate + NAD(+) = dihydroxyacetone phosphate + NADH + H(+). The enzyme catalyses sn-glycerol 3-phosphate + NADP(+) = dihydroxyacetone phosphate + NADPH + H(+). It participates in membrane lipid metabolism; glycerophospholipid metabolism. Functionally, catalyzes the reduction of the glycolytic intermediate dihydroxyacetone phosphate (DHAP) to sn-glycerol 3-phosphate (G3P), the key precursor for phospholipid synthesis. The polypeptide is Glycerol-3-phosphate dehydrogenase [NAD(P)+] (Bordetella bronchiseptica (strain ATCC BAA-588 / NCTC 13252 / RB50) (Alcaligenes bronchisepticus)).